Here is a 72-residue protein sequence, read N- to C-terminus: Cytochrome c oxidase subunit 2 (72 aa).

Residues 1–14 lie on the Mitochondrial intermembrane side of the membrane; that stretch reads MAHPSQLGFQDAAS. The helical transmembrane segment at 15 to 45 threads the bilayer; that stretch reads PVMEELLHFHDHALMIVFLISTLVLYIIVAM. Topologically, residues 46–72 are mitochondrial matrix; sequence VSTKLTNKYXLDSQEIEVIWTXLPAVI.

The protein belongs to the cytochrome c oxidase subunit 2 family. Component of the cytochrome c oxidase (complex IV, CIV), a multisubunit enzyme composed of 14 subunits. The complex is composed of a catalytic core of 3 subunits MT-CO1, MT-CO2 and MT-CO3, encoded in the mitochondrial DNA, and 11 supernumerary subunits COX4I, COX5A, COX5B, COX6A, COX6B, COX6C, COX7A, COX7B, COX7C, COX8 and NDUFA4, which are encoded in the nuclear genome. The complex exists as a monomer or a dimer and forms supercomplexes (SCs) in the inner mitochondrial membrane with NADH-ubiquinone oxidoreductase (complex I, CI) and ubiquinol-cytochrome c oxidoreductase (cytochrome b-c1 complex, complex III, CIII), resulting in different assemblies (supercomplex SCI(1)III(2)IV(1) and megacomplex MCI(2)III(2)IV(2)). Found in a complex with TMEM177, COA6, COX18, COX20, SCO1 and SCO2. Interacts with TMEM177 in a COX20-dependent manner. Interacts with COX20. Interacts with COX16. It depends on Cu cation as a cofactor.

The protein localises to the mitochondrion inner membrane. It catalyses the reaction 4 Fe(II)-[cytochrome c] + O2 + 8 H(+)(in) = 4 Fe(III)-[cytochrome c] + 2 H2O + 4 H(+)(out). Functionally, component of the cytochrome c oxidase, the last enzyme in the mitochondrial electron transport chain which drives oxidative phosphorylation. The respiratory chain contains 3 multisubunit complexes succinate dehydrogenase (complex II, CII), ubiquinol-cytochrome c oxidoreductase (cytochrome b-c1 complex, complex III, CIII) and cytochrome c oxidase (complex IV, CIV), that cooperate to transfer electrons derived from NADH and succinate to molecular oxygen, creating an electrochemical gradient over the inner membrane that drives transmembrane transport and the ATP synthase. Cytochrome c oxidase is the component of the respiratory chain that catalyzes the reduction of oxygen to water. Electrons originating from reduced cytochrome c in the intermembrane space (IMS) are transferred via the dinuclear copper A center (CU(A)) of subunit 2 and heme A of subunit 1 to the active site in subunit 1, a binuclear center (BNC) formed by heme A3 and copper B (CU(B)). The BNC reduces molecular oxygen to 2 water molecules using 4 electrons from cytochrome c in the IMS and 4 protons from the mitochondrial matrix. The protein is Cytochrome c oxidase subunit 2 (mt-co2) of Gomphosus varius (Bird wrasse).